Reading from the N-terminus, the 756-residue chain is 5-methyltetrahydropteroyltriglutamate--homocysteine methyltransferase (756 aa).

5-methyltetrahydropteroyltri-L-glutamate-binding positions include 16–19 (RELK) and Lys112. L-homocysteine-binding positions include 432–434 (IGS) and Glu485. Residues 432–434 (IGS) and Glu485 each bind L-methionine. Residues 516–517 (RC) and Trp562 contribute to the 5-methyltetrahydropteroyltri-L-glutamate site. Asp600 contributes to the L-homocysteine binding site. An L-methionine-binding site is contributed by Asp600. Glu606 contributes to the 5-methyltetrahydropteroyltri-L-glutamate binding site. Residues His642, Cys644, and Glu666 each coordinate Zn(2+). The Proton donor role is filled by His695. A Zn(2+)-binding site is contributed by Cys727.

It belongs to the vitamin-B12 independent methionine synthase family. Zn(2+) serves as cofactor.

The enzyme catalyses 5-methyltetrahydropteroyltri-L-glutamate + L-homocysteine = tetrahydropteroyltri-L-glutamate + L-methionine. Its pathway is amino-acid biosynthesis; L-methionine biosynthesis via de novo pathway; L-methionine from L-homocysteine (MetE route): step 1/1. Its function is as follows. Catalyzes the transfer of a methyl group from 5-methyltetrahydrofolate to homocysteine resulting in methionine formation. The sequence is that of 5-methyltetrahydropteroyltriglutamate--homocysteine methyltransferase from Haemophilus influenzae (strain PittGG).